Reading from the N-terminus, the 657-residue chain is tRNA 5-methylaminomethyl-2-thiouridine biosynthesis bifunctional protein MnmC (657 aa).

Residues 1–235 are tRNA (mnm(5)s(2)U34)-methyltransferase; sequence MSDAHNAQLD…KREMLAGPFQ (235 aa). An FAD-dependent cmnm(5)s(2)U34 oxidoreductase region spans residues 261–657; the sequence is IGAGLAGCAT…QLIRGTGSPT (397 aa).

In the N-terminal section; belongs to the methyltransferase superfamily. tRNA (mnm(5)s(2)U34)-methyltransferase family. This sequence in the C-terminal section; belongs to the DAO family. It depends on FAD as a cofactor.

It is found in the cytoplasm. It catalyses the reaction 5-aminomethyl-2-thiouridine(34) in tRNA + S-adenosyl-L-methionine = 5-methylaminomethyl-2-thiouridine(34) in tRNA + S-adenosyl-L-homocysteine + H(+). Its function is as follows. Catalyzes the last two steps in the biosynthesis of 5-methylaminomethyl-2-thiouridine (mnm(5)s(2)U) at the wobble position (U34) in tRNA. Catalyzes the FAD-dependent demodification of cmnm(5)s(2)U34 to nm(5)s(2)U34, followed by the transfer of a methyl group from S-adenosyl-L-methionine to nm(5)s(2)U34, to form mnm(5)s(2)U34. This Ectopseudomonas mendocina (strain ymp) (Pseudomonas mendocina) protein is tRNA 5-methylaminomethyl-2-thiouridine biosynthesis bifunctional protein MnmC.